Consider the following 433-residue polypeptide: Legumain (433 aa).

Residues 1–17 form the signal peptide; that stretch reads MIWEFTVLLSLVLGTGA. A propeptide spanning residues 18-25 is cleaved from the precursor; it reads VPLEDPED. A glycan (N-linked (GlcNAc...) asparagine) is linked at Asn-91. His-148 is an active-site residue. Residue Asn-167 is glycosylated (N-linked (GlcNAc...) asparagine). The active-site Nucleophile is the Cys-189. Residues Asn-263 and Asn-272 are each glycosylated (N-linked (GlcNAc...) asparagine). The propeptide occupies 324–433; sequence DLQESRRLVQ…SMNKVCHGYY (110 aa). Intrachain disulfides connect Cys-378/Cys-412 and Cys-390/Cys-429.

It belongs to the peptidase C13 family. As to quaternary structure, homodimer before autocatalytic removal of the propeptide. Monomer after autocatalytic processing. May interact with integrins. Post-translationally, activated by autocatalytic processing at pH 4. In terms of tissue distribution, detected in kidney (at protein level).

The protein localises to the lysosome. It carries out the reaction Hydrolysis of proteins and small molecule substrates at -Asn-|-Xaa- bonds.. Functionally, has a strict specificity for hydrolysis of asparaginyl bonds. Can also cleave aspartyl bonds slowly, especially under acidic conditions. Involved in the processing of proteins for MHC class II antigen presentation in the lysosomal/endosomal system. Also involved in MHC class I antigen presentation in cross-presenting dendritic cells by mediating cleavage and maturation of Perforin-2 (MPEG1), thereby promoting antigen translocation in the cytosol. Required for normal lysosomal protein degradation in renal proximal tubules. Required for normal degradation of internalized EGFR. Plays a role in the regulation of cell proliferation via its role in EGFR degradation. The protein is Legumain (LGMN) of Bos taurus (Bovine).